A 271-amino-acid polypeptide reads, in one-letter code: Effector CFEM6 (271 aa).

The N-terminal stretch at 1-17 (MKYSMITLGAFAMMAVA) is a signal peptide. Residues 18-111 (QLSSLPACGQ…LGPATAVVAS (94 aa)) form the CFEM domain. 4 cysteine pairs are disulfide-bonded: Cys25/Cys68, Cys29/Cys63, Cys42/Cys49, and Cys51/Cys84. Asp46 provides a ligand contact to heme. Ser247 carries the GPI-anchor amidated serine lipid modification. The propeptide at 248–271 (SAGGARQTAFAGLAAAAGFAAIIL) is removed in mature form.

It belongs to the RBT5 family.

The protein localises to the cell membrane. It localises to the secreted. Its subcellular location is the host nucleus. It is found in the host cell membrane. The protein resides in the host chloroplast envelope. Functionally, appears to function during host infection, and may play a role in suppressing the host immune response. The protein is Effector CFEM6 of Marssonina brunnea f. sp. multigermtubi (strain MB_m1) (Marssonina leaf spot fungus).